Reading from the N-terminus, the 505-residue chain is Glycerol kinase 1 (505 aa).

Residue threonine 13 participates in ADP binding. The ATP site is built by threonine 13, threonine 14, and serine 15. Threonine 13 contributes to the sn-glycerol 3-phosphate binding site. Residue arginine 17 participates in ADP binding. Sn-glycerol 3-phosphate contacts are provided by arginine 83, glutamate 84, and tyrosine 135. Glycerol-binding residues include arginine 83, glutamate 84, and tyrosine 135. Histidine 231 carries the post-translational modification Phosphohistidine; by HPr. Aspartate 245 contacts sn-glycerol 3-phosphate. Glycerol is bound by residues aspartate 245 and glutamine 246. ADP contacts are provided by threonine 267 and glycine 310. Threonine 267, glycine 310, glutamine 314, and glycine 411 together coordinate ATP. ADP contacts are provided by glycine 411 and asparagine 415.

The protein belongs to the FGGY kinase family. Homotetramer and homodimer (in equilibrium). The phosphoenolpyruvate-dependent sugar phosphotransferase system (PTS), including enzyme I, and histidine-containing protein (HPr) are required for the phosphorylation, which leads to the activation of the enzyme.

It carries out the reaction glycerol + ATP = sn-glycerol 3-phosphate + ADP + H(+). It functions in the pathway polyol metabolism; glycerol degradation via glycerol kinase pathway; sn-glycerol 3-phosphate from glycerol: step 1/1. With respect to regulation, activated by phosphorylation and inhibited by fructose 1,6-bisphosphate (FBP). Functionally, key enzyme in the regulation of glycerol uptake and metabolism. Catalyzes the phosphorylation of glycerol to yield sn-glycerol 3-phosphate. This chain is Glycerol kinase 1, found in Lactiplantibacillus plantarum (strain ATCC BAA-793 / NCIMB 8826 / WCFS1) (Lactobacillus plantarum).